Consider the following 113-residue polypeptide: Putative pterin-4-alpha-carbinolamine dehydratase (113 aa).

This sequence belongs to the pterin-4-alpha-carbinolamine dehydratase family.

The catalysed reaction is (4aS,6R)-4a-hydroxy-L-erythro-5,6,7,8-tetrahydrobiopterin = (6R)-L-erythro-6,7-dihydrobiopterin + H2O. This is Putative pterin-4-alpha-carbinolamine dehydratase from Legionella pneumophila (strain Lens).